Reading from the N-terminus, the 315-residue chain is Glucokinase-like protein CC_3167 (315 aa).

This sequence belongs to the bacterial glucokinase family.

The sequence is that of Glucokinase-like protein CC_3167 from Caulobacter vibrioides (strain ATCC 19089 / CIP 103742 / CB 15) (Caulobacter crescentus).